A 202-amino-acid chain; its full sequence is Na(+)-translocating NADH-quinone reductase subunit E (202 aa).

The next 6 membrane-spanning stretches (helical) occupy residues 11-31 (SVFI…FLAV), 35-55 (VTTA…SVPA), 79-99 (LSFL…QILE), 114-134 (GIFL…AFMV), 144-164 (LVFG…LAAV), and 180-200 (LGIT…FSGV).

It belongs to the NqrDE/RnfAE family. Composed of six subunits; NqrA, NqrB, NqrC, NqrD, NqrE and NqrF.

It localises to the cell inner membrane. The enzyme catalyses a ubiquinone + n Na(+)(in) + NADH + H(+) = a ubiquinol + n Na(+)(out) + NAD(+). In terms of biological role, NQR complex catalyzes the reduction of ubiquinone-1 to ubiquinol by two successive reactions, coupled with the transport of Na(+) ions from the cytoplasm to the periplasm. NqrA to NqrE are probably involved in the second step, the conversion of ubisemiquinone to ubiquinol. The chain is Na(+)-translocating NADH-quinone reductase subunit E from Shewanella denitrificans (strain OS217 / ATCC BAA-1090 / DSM 15013).